A 292-amino-acid chain; its full sequence is Ribosomal protein L11 methyltransferase (292 aa).

Residues T144, G165, D187, and N229 each coordinate S-adenosyl-L-methionine.

This sequence belongs to the methyltransferase superfamily. PrmA family.

Its subcellular location is the cytoplasm. It carries out the reaction L-lysyl-[protein] + 3 S-adenosyl-L-methionine = N(6),N(6),N(6)-trimethyl-L-lysyl-[protein] + 3 S-adenosyl-L-homocysteine + 3 H(+). Its function is as follows. Methylates ribosomal protein L11. In Pseudomonas putida (strain ATCC 700007 / DSM 6899 / JCM 31910 / BCRC 17059 / LMG 24140 / F1), this protein is Ribosomal protein L11 methyltransferase.